The primary structure comprises 242 residues: Protein MHF1 homolog (242 aa).

The tract at residues 208–242 is disordered; sequence LKAKEPQSERKRKKGSAKKEDKASSSNAVRITTDL. Polar residues predominate over residues 231 to 242; sequence SSSNAVRITTDL.

Belongs to the TAF9 family. CENP-S/MHF1 subfamily.

The protein resides in the nucleus. Functionally, involved in the promotion of spontaneous somatic homologous recombination (HR) events, which is opposite to the function of FANCM in ordered HR. Only FANCM is essential for replicative repair in the absence of the endonuclease MUS81. Acts in the same pathway as FANCM to restrain class II meiotic crossing over (CO), and acts with FANCM during meiosis to repair interstrand cross-links (ICLs). This common pathway between MHF1 and FANCM is in parallel to the pathway that involves the RECQ4A helicase. This Arabidopsis thaliana (Mouse-ear cress) protein is Protein MHF1 homolog.